The sequence spans 654 residues: Macrolide export ATP-binding/permease protein MacB (654 aa).

The 239-residue stretch at Leu-6 to Ser-244 folds into the ABC transporter domain. Gly-42–Ser-49 is an ATP binding site. 4 helical membrane passes run Phe-280–Gly-300, Leu-529–Ile-549, Leu-584–Phe-604, and Ser-619–Ala-639.

The protein belongs to the ABC transporter superfamily. Macrolide exporter (TC 3.A.1.122) family. Homodimer. Part of the tripartite efflux system MacAB-TolC, which is composed of an inner membrane transporter, MacB, a periplasmic membrane fusion protein, MacA, and an outer membrane component, TolC. The complex forms a large protein conduit and can translocate molecules across both the inner and outer membranes. Interacts with MacA.

It localises to the cell inner membrane. Functionally, part of the tripartite efflux system MacAB-TolC. MacB is a non-canonical ABC transporter that contains transmembrane domains (TMD), which form a pore in the inner membrane, and an ATP-binding domain (NBD), which is responsible for energy generation. Confers resistance against macrolides. This Vibrio parahaemolyticus serotype O3:K6 (strain RIMD 2210633) protein is Macrolide export ATP-binding/permease protein MacB.